The following is a 101-amino-acid chain: NAD(P)H-quinone oxidoreductase subunit 4L, chloroplastic (101 aa).

Helical transmembrane passes span 2 to 22 (MLEH…YGLI), 32 to 52 (MCLE…SDFF), and 61 to 81 (IFSI…SAIV).

Belongs to the complex I subunit 4L family. In terms of assembly, NDH is composed of at least 16 different subunits, 5 of which are encoded in the nucleus.

The protein localises to the plastid. It is found in the chloroplast thylakoid membrane. The enzyme catalyses a plastoquinone + NADH + (n+1) H(+)(in) = a plastoquinol + NAD(+) + n H(+)(out). The catalysed reaction is a plastoquinone + NADPH + (n+1) H(+)(in) = a plastoquinol + NADP(+) + n H(+)(out). Functionally, NDH shuttles electrons from NAD(P)H:plastoquinone, via FMN and iron-sulfur (Fe-S) centers, to quinones in the photosynthetic chain and possibly in a chloroplast respiratory chain. The immediate electron acceptor for the enzyme in this species is believed to be plastoquinone. Couples the redox reaction to proton translocation, and thus conserves the redox energy in a proton gradient. The protein is NAD(P)H-quinone oxidoreductase subunit 4L, chloroplastic of Gossypium barbadense (Sea Island cotton).